A 522-amino-acid polypeptide reads, in one-letter code: Gypsy retrotransposon integrase-like protein 1 (522 aa).

The Integrase catalytic domain maps to 135–292 (KVENPWSLVT…TPYFQMFSRN (158 aa)).

This is Gypsy retrotransposon integrase-like protein 1 (GIN1) from Macaca fascicularis (Crab-eating macaque).